We begin with the raw amino-acid sequence, 513 residues long: ATP synthase subunit alpha (513 aa).

169–176 (GDRQIGKT) is a binding site for ATP.

The protein belongs to the ATPase alpha/beta chains family. As to quaternary structure, F-type ATPases have 2 components, CF(1) - the catalytic core - and CF(0) - the membrane proton channel. CF(1) has five subunits: alpha(3), beta(3), gamma(1), delta(1), epsilon(1). CF(0) has three main subunits: a(1), b(2) and c(9-12). The alpha and beta chains form an alternating ring which encloses part of the gamma chain. CF(1) is attached to CF(0) by a central stalk formed by the gamma and epsilon chains, while a peripheral stalk is formed by the delta and b chains.

It localises to the cell inner membrane. The enzyme catalyses ATP + H2O + 4 H(+)(in) = ADP + phosphate + 5 H(+)(out). In terms of biological role, produces ATP from ADP in the presence of a proton gradient across the membrane. The alpha chain is a regulatory subunit. The protein is ATP synthase subunit alpha of Francisella tularensis subsp. tularensis (strain SCHU S4 / Schu 4).